The primary structure comprises 526 residues: GMP synthase [glutamine-hydrolyzing] (526 aa).

Residues 9 to 207 (RILILNFGSQ…VLDICSCQGR (199 aa)) enclose the Glutamine amidotransferase type-1 domain. Residue C86 is the Nucleophile of the active site. Active-site residues include H181 and E183. One can recognise a GMPS ATP-PPase domain in the interval 208–401 (WTPNNIKENI…LGLPFHMLYR (194 aa)). An ATP-binding site is contributed by 235-241 (SGGVDST).

In terms of assembly, homodimer.

The enzyme catalyses XMP + L-glutamine + ATP + H2O = GMP + L-glutamate + AMP + diphosphate + 2 H(+). The protein operates within purine metabolism; GMP biosynthesis; GMP from XMP (L-Gln route): step 1/1. Catalyzes the synthesis of GMP from XMP. The protein is GMP synthase [glutamine-hydrolyzing] of Baumannia cicadellinicola subsp. Homalodisca coagulata.